The primary structure comprises 413 residues: THAP domain-containing protein 5 (413 aa).

The THAP-type zinc finger occupies 1 to 85 (MPRYCAASYC…LKHTAVPTIF (85 aa)). The segment at 84-118 (IFSSPDDEEKGSSQNSPQEIRREDQEETTKNVESK) is disordered. The span at 102-118 (EIRREDQEETTKNVESK) shows a compositional bias: basic and acidic residues. Residues 375–399 (RLRSLEALIGQLKQENLLSEEKLKI) adopt a coiled-coil conformation.

Its subcellular location is the nucleus. The protein is THAP domain-containing protein 5 (THAP5) of Gallus gallus (Chicken).